The following is a 156-amino-acid chain: Transcriptional repressor NrdR (156 aa).

Residues 3–34 (CPFCHSDNDKVQDSRTAEAGYVVRRKRLCQTC) fold into a zinc finger. Residues 49-139 (VRVVKSDETR…VYRDFDDAKD (91 aa)) enclose the ATP-cone domain.

The protein belongs to the NrdR family. Requires Zn(2+) as cofactor.

Its function is as follows. Negatively regulates transcription of bacterial ribonucleotide reductase nrd genes and operons by binding to NrdR-boxes. The chain is Transcriptional repressor NrdR from Rhodopirellula baltica (strain DSM 10527 / NCIMB 13988 / SH1).